A 148-amino-acid polypeptide reads, in one-letter code: Deoxyuridine 5'-triphosphate nucleotidohydrolase (148 aa).

Residues 67 to 69, asparagine 80, 84 to 86, and methionine 94 contribute to the substrate site; these read RSG and LID.

Belongs to the dUTPase family. Requires Mg(2+) as cofactor.

The enzyme catalyses dUTP + H2O = dUMP + diphosphate + H(+). It functions in the pathway pyrimidine metabolism; dUMP biosynthesis; dUMP from dCTP (dUTP route): step 2/2. This enzyme is involved in nucleotide metabolism: it produces dUMP, the immediate precursor of thymidine nucleotides and it decreases the intracellular concentration of dUTP so that uracil cannot be incorporated into DNA. In Francisella philomiragia subsp. philomiragia (strain ATCC 25017 / CCUG 19701 / FSC 153 / O#319-036), this protein is Deoxyuridine 5'-triphosphate nucleotidohydrolase.